Consider the following 234-residue polypeptide: Large ribosomal subunit protein uL3 (234 aa).

Positions 137–156 (AGHGVERKHRSPGSVGGCAT) are disordered.

It belongs to the universal ribosomal protein uL3 family. In terms of assembly, part of the 50S ribosomal subunit. Forms a cluster with proteins L14 and L19.

Functionally, one of the primary rRNA binding proteins, it binds directly near the 3'-end of the 23S rRNA, where it nucleates assembly of the 50S subunit. This chain is Large ribosomal subunit protein uL3, found in Frankia alni (strain DSM 45986 / CECT 9034 / ACN14a).